A 158-amino-acid polypeptide reads, in one-letter code: C-type lectin BML-1 (158 aa).

A signal peptide spans 1-23; sequence MGHFTFTGLCLLAMFLSLRGAEC. Cystine bridges form between Cys26/Cys37, Cys54/Cys154, Cys61/Cys156, and Cys129/Cys146. In terms of domain architecture, C-type lectin spans 33 to 155; the sequence is KNGLCYKVFS…CAALRPFLCQ (123 aa). Ca(2+) contacts are provided by Gln119, Asp121, and Glu127. Residues 119 to 121 carry the Galactose-binding motif; that stretch reads QPD. A glycan (N-linked (GlcNAc...) asparagine) is linked at Asn134. Ca(2+)-binding residues include Asn142 and Asp143.

The protein belongs to the true venom lectin family. As to quaternary structure, homodimer; non-covalently linked. In terms of tissue distribution, expressed by the venom gland.

The protein localises to the secreted. Recombinant C-type lectin BML-1 is able to agglutinate erythrocytes. May be a calcium-dependent lectin. In Bungarus multicinctus (Many-banded krait), this protein is C-type lectin BML-1.